Here is a 339-residue protein sequence, read N- to C-terminus: Anthranilate phosphoribosyltransferase (339 aa).

Residues G81, 84–85, S89, 91–94, 109–117, and A121 contribute to the 5-phospho-alpha-D-ribose 1-diphosphate site; these read GD, NVSS, and KHGNRALSS. G81 lines the anthranilate pocket. S93 serves as a coordination point for Mg(2+). Residue N112 participates in anthranilate binding. R167 lines the anthranilate pocket. Mg(2+) contacts are provided by D225 and E226.

The protein belongs to the anthranilate phosphoribosyltransferase family. As to quaternary structure, homodimer. It depends on Mg(2+) as a cofactor.

The catalysed reaction is N-(5-phospho-beta-D-ribosyl)anthranilate + diphosphate = 5-phospho-alpha-D-ribose 1-diphosphate + anthranilate. The protein operates within amino-acid biosynthesis; L-tryptophan biosynthesis; L-tryptophan from chorismate: step 2/5. In terms of biological role, catalyzes the transfer of the phosphoribosyl group of 5-phosphorylribose-1-pyrophosphate (PRPP) to anthranilate to yield N-(5'-phosphoribosyl)-anthranilate (PRA). This Brucella suis (strain ATCC 23445 / NCTC 10510) protein is Anthranilate phosphoribosyltransferase.